A 142-amino-acid polypeptide reads, in one-letter code: Large ribosomal subunit protein uL11 (142 aa).

The protein belongs to the universal ribosomal protein uL11 family. In terms of assembly, part of the ribosomal stalk of the 50S ribosomal subunit. Interacts with L10 and the large rRNA to form the base of the stalk. L10 forms an elongated spine to which L12 dimers bind in a sequential fashion forming a multimeric L10(L12)X complex. In terms of processing, one or more lysine residues are methylated.

In terms of biological role, forms part of the ribosomal stalk which helps the ribosome interact with GTP-bound translation factors. This chain is Large ribosomal subunit protein uL11, found in Mannheimia succiniciproducens (strain KCTC 0769BP / MBEL55E).